Consider the following 216-residue polypeptide: Probable nicotinate-nucleotide adenylyltransferase (216 aa).

Belongs to the NadD family.

The catalysed reaction is nicotinate beta-D-ribonucleotide + ATP + H(+) = deamido-NAD(+) + diphosphate. Its pathway is cofactor biosynthesis; NAD(+) biosynthesis; deamido-NAD(+) from nicotinate D-ribonucleotide: step 1/1. In terms of biological role, catalyzes the reversible adenylation of nicotinate mononucleotide (NaMN) to nicotinic acid adenine dinucleotide (NaAD). The chain is Probable nicotinate-nucleotide adenylyltransferase from Geotalea daltonii (strain DSM 22248 / JCM 15807 / FRC-32) (Geobacter daltonii).